Here is a 126-residue protein sequence, read N- to C-terminus: Holo-[acyl-carrier-protein] synthase (126 aa).

Mg(2+) contacts are provided by D9 and E58.

It belongs to the P-Pant transferase superfamily. AcpS family. Requires Mg(2+) as cofactor.

It is found in the cytoplasm. The enzyme catalyses apo-[ACP] + CoA = holo-[ACP] + adenosine 3',5'-bisphosphate + H(+). Transfers the 4'-phosphopantetheine moiety from coenzyme A to a Ser of acyl-carrier-protein. The chain is Holo-[acyl-carrier-protein] synthase from Vibrio vulnificus (strain CMCP6).